Reading from the N-terminus, the 316-residue chain is Conjugated bile acid hydrolase (316 aa).

Cysteine 2 acts as the Nucleophile in catalysis. Cysteine 2 and arginine 18 together coordinate deoxycholate. Residue asparagine 81 coordinates taurine.

This sequence belongs to the peptidase C59 family.

It carries out the reaction cholate + taurine = taurocholate + H2O. It catalyses the reaction taurochenodeoxycholate + H2O = chenodeoxycholate + taurine. The catalysed reaction is taurodeoxycholate + H2O = deoxycholate + taurine. The enzyme catalyses glycocholate + H2O = cholate + glycine. It carries out the reaction glycodeoxycholate + H2O = deoxycholate + glycine. It functions in the pathway lipid metabolism; bile acid biosynthesis. In terms of biological role, bile salt hydrolase that catalyzes the deconjugation of glycine- and taurine-linked bile salts, which occurs naturally in the intestines of humans, releasing amino acid residues and deconjugated bile salts (bile acids). Can hydrolyze the amide bond in the bile salts taurocholate (TCA), taurodeoxycholate (TDCA), taurochenodeoxycholate (TCDCA), glycocholate (GCA) and glycodeoxycholate (GDCA). Shows highest activity toward the taurine-conjugated bile salts TCA and TCDCA. The activity toward the other three substrates (TDCA, GCA and GDCA) is relatively low. This enzyme likely contributes to bile salt resistance of the strain and may be associated with survival capability of strain JCM1131 within the human intestine by bile detoxification. The sequence is that of Conjugated bile acid hydrolase from Lactobacillus gasseri (strain ATCC 33323 / DSM 20243 / BCRC 14619 / CIP 102991 / JCM 1131 / KCTC 3163 / NCIMB 11718 / NCTC 13722 / AM63).